Here is a 964-residue protein sequence, read N- to C-terminus: Syndetin (964 aa).

Methionine 1 bears the N-acetylmethionine mark. Residues 1–25 (MQKIKSLMTRQGLKSPPESLNDLGA) are disordered. At serine 15 the chain carries Phosphoserine. Coiled-coil stretches lie at residues 81–107 (LNLQ…VADL) and 216–244 (YSCI…LSKI). A phosphoserine mark is found at serine 494, serine 498, serine 559, and serine 561. Residues 532-563 (DEETEDVLASNGYESDEQEKSAYQDYDSDSDV) form a disordered region. Residue lysine 963 forms a Glycyl lysine isopeptide (Lys-Gly) (interchain with G-Cter in SUMO1); alternate linkage. Residue lysine 963 forms a Glycyl lysine isopeptide (Lys-Gly) (interchain with G-Cter in SUMO2); alternate linkage.

This sequence belongs to the syndetin family. As to quaternary structure, component of the endosome-associated retrograde protein (EARP) complex, composed of VPS51, VPS52, VPS53 and VPS50/Syndetin. The EARP complex interacts with EIPR1. Interacts with VPS51 and VPS53 in an EIPR1-independent manner. Expressed in the brain (at protein level).

The protein resides in the recycling endosome. Its subcellular location is the membrane. Its function is as follows. Acts as a component of the EARP complex that is involved in endocytic recycling. The EARP complex associates with Rab4-positive endosomes and promotes recycling of internalized transferrin receptor (TFRC) to the plasma membrane. Within the EARP complex, required to tether the complex to recycling endosomes. Not involved in retrograde transport from early and late endosomes to the trans-Golgi network (TGN). In Rattus norvegicus (Rat), this protein is Syndetin.